The sequence spans 323 residues: Beta-ketoacyl-[acyl-carrier-protein] synthase III (323 aa).

Active-site residues include cysteine 113 and histidine 250. Residues 251–255 are ACP-binding; the sequence is QANLR. Residue asparagine 280 is part of the active site.

This sequence belongs to the thiolase-like superfamily. FabH family. Homodimer.

The protein localises to the cytoplasm. It carries out the reaction malonyl-[ACP] + acetyl-CoA + H(+) = 3-oxobutanoyl-[ACP] + CO2 + CoA. The protein operates within lipid metabolism; fatty acid biosynthesis. Catalyzes the condensation reaction of fatty acid synthesis by the addition to an acyl acceptor of two carbons from malonyl-ACP. Catalyzes the first condensation reaction which initiates fatty acid synthesis and may therefore play a role in governing the total rate of fatty acid production. Possesses both acetoacetyl-ACP synthase and acetyl transacylase activities. Its substrate specificity determines the biosynthesis of branched-chain and/or straight-chain of fatty acids. This Paracoccus denitrificans (strain Pd 1222) protein is Beta-ketoacyl-[acyl-carrier-protein] synthase III.